Here is a 623-residue protein sequence, read N- to C-terminus: Low affinity potassium transport system protein Kup (623 aa).

12 consecutive transmembrane segments (helical) span residues 10–30 (LSAV…TSPL), 47–67 (PDVV…IVSV), 102–122 (ILVI…VITP), 138–158 (PALD…LFVI), 166–186 (VGKL…LLGL), 214–234 (VSFF…ALYA), 248–268 (WFTV…ALLL), 277–297 (PFFL…ATLA), 338–358 (IYIP…IVGF), 364–384 (LAAA…VLFC), 396–416 (FFVY…FSAN), and 420–440 (LFSG…IMTT).

Belongs to the HAK/KUP transporter (TC 2.A.72) family.

The protein resides in the cell inner membrane. The enzyme catalyses K(+)(in) + H(+)(in) = K(+)(out) + H(+)(out). Responsible for the low-affinity transport of potassium into the cell. Likely operates as a K(+):H(+) symporter. The protein is Low affinity potassium transport system protein Kup of Yersinia enterocolitica serotype O:8 / biotype 1B (strain NCTC 13174 / 8081).